Reading from the N-terminus, the 338-residue chain is Ketol-acid reductoisomerase (NADP(+)) (338 aa).

In terms of domain architecture, KARI N-terminal Rossmann spans 1-181 (MNVFYDKDAD…GGGRAGIIET (181 aa)). NADP(+)-binding positions include 24 to 27 (YGSQ), Arg-47, and Ser-52. The active site involves His-107. Gly-133 contributes to the NADP(+) binding site. A KARI C-terminal knotted domain is found at 182 to 327 (NFREETETDL…AKLRAMMPWI (146 aa)). Mg(2+) is bound by residues Asp-190, Glu-194, Glu-226, and Glu-230. Residue Ser-251 participates in substrate binding.

The protein belongs to the ketol-acid reductoisomerase family. The cofactor is Mg(2+).

It catalyses the reaction (2R)-2,3-dihydroxy-3-methylbutanoate + NADP(+) = (2S)-2-acetolactate + NADPH + H(+). It carries out the reaction (2R,3R)-2,3-dihydroxy-3-methylpentanoate + NADP(+) = (S)-2-ethyl-2-hydroxy-3-oxobutanoate + NADPH + H(+). It functions in the pathway amino-acid biosynthesis; L-isoleucine biosynthesis; L-isoleucine from 2-oxobutanoate: step 2/4. Its pathway is amino-acid biosynthesis; L-valine biosynthesis; L-valine from pyruvate: step 2/4. In terms of biological role, involved in the biosynthesis of branched-chain amino acids (BCAA). Catalyzes an alkyl-migration followed by a ketol-acid reduction of (S)-2-acetolactate (S2AL) to yield (R)-2,3-dihydroxy-isovalerate. In the isomerase reaction, S2AL is rearranged via a Mg-dependent methyl migration to produce 3-hydroxy-3-methyl-2-ketobutyrate (HMKB). In the reductase reaction, this 2-ketoacid undergoes a metal-dependent reduction by NADPH to yield (R)-2,3-dihydroxy-isovalerate. The sequence is that of Ketol-acid reductoisomerase (NADP(+)) from Burkholderia cenocepacia (strain ATCC BAA-245 / DSM 16553 / LMG 16656 / NCTC 13227 / J2315 / CF5610) (Burkholderia cepacia (strain J2315)).